Reading from the N-terminus, the 737-residue chain is Fibronectin type III domain-containing protein 7 (737 aa).

Positions 1–25 (MAGRPEKCFSLIRFTLLCLKMVISS) are cleaved as a signal peptide. Fibronectin type-III domains follow at residues 28-115 (APEI…TVLA), 116-203 (APVL…SPRA), 204-288 (PANI…TVAC), 289-373 (APGR…TAPC), 374-459 (CPND…TAPC), 460-544 (SPEI…TVPC), 545-633 (CPAG…CPLG), and 631-715 (PLGV…YSVT). A glycan (N-linked (GlcNAc...) asparagine) is linked at N230. N-linked (GlcNAc...) asparagine glycosylation is present at N433.

The protein resides in the secreted. The polypeptide is Fibronectin type III domain-containing protein 7 (Fndc7) (Mus musculus (Mouse)).